The following is a 398-amino-acid chain: Acetate kinase (398 aa).

A Mg(2+)-binding site is contributed by Asn7. Residue Lys14 participates in ATP binding. Arg96 contributes to the substrate binding site. Catalysis depends on Asp153, which acts as the Proton donor/acceptor. ATP contacts are provided by residues 210-214 (HLGNG), 284-286 (DLR), and 332-336 (GIGEH). Residue Glu385 participates in Mg(2+) binding.

It belongs to the acetokinase family. In terms of assembly, homodimer. It depends on Mg(2+) as a cofactor. The cofactor is Mn(2+).

It localises to the cytoplasm. The enzyme catalyses acetate + ATP = acetyl phosphate + ADP. The protein operates within metabolic intermediate biosynthesis; acetyl-CoA biosynthesis; acetyl-CoA from acetate: step 1/2. Its function is as follows. Catalyzes the formation of acetyl phosphate from acetate and ATP. Can also catalyze the reverse reaction. This chain is Acetate kinase, found in Acaryochloris marina (strain MBIC 11017).